The primary structure comprises 366 residues: Isocitrate dehydrogenase [NAD] subunit alpha, mitochondrial (366 aa).

The transit peptide at 1 to 27 (MAGPAWISKVSRLLGAFHNPKQVTRGF) directs the protein to the mitochondrion. Lysine 77 bears the N6-succinyllysine mark. Threonine 101 bears the Phosphothreonine mark. Residues arginine 115, arginine 125, and arginine 146 each contribute to the substrate site. An N6-acetyllysine modification is found at lysine 223. Aspartate 233, aspartate 257, and aspartate 261 together coordinate Mg(2+). Lysine 343 bears the N6-acetyllysine; alternate mark. The residue at position 343 (lysine 343) is an N6-succinyllysine; alternate. Position 350 is an N6-succinyllysine (lysine 350).

The protein belongs to the isocitrate and isopropylmalate dehydrogenases family. As to quaternary structure, heterooligomer of subunits alpha (IDH3A), beta (IDH3B), and gamma (IDH3G) in the apparent ratio of 2:1:1. The heterodimer containing one IDH3A and one IDH3B subunit and the heterodimer containing one IDH3A and one IDH3G subunit assemble into a heterotetramer (which contains two subunits of IDH3A, one of IDH3B and one of IDH3G) and further into the heterooctamer. Mg(2+) serves as cofactor. The cofactor is Mn(2+).

It is found in the mitochondrion. It catalyses the reaction D-threo-isocitrate + NAD(+) = 2-oxoglutarate + CO2 + NADH. With respect to regulation, the heterotetramer and the heterodimer composed of IDH3A and IDH3G subunits can be allosterically activated by citrate (CIT) or/and ADP, and the two activators can act independently or synergistically. The heterodimer composed of IDH3A and IDH3B subunits cannot be allosterically regulated and the allosteric regulation of the heterotetramer is through the IDH3G subunit and not the IDH3B subunit. The IDH3G subunit contains the allosteric site which consists of a CIT-binding site and an ADP-binding site, and the binding of CIT and ADP causes conformational changes at the allosteric site which are transmitted to the active site in the catalytic subunit (IDH3A) through a cascade of conformational changes at the heterodimer interface, leading to stabilization of the isocitrate-binding at the active site and thus activation of the enzyme. ATP can activate the heterotetramer and the heterodimer composed of IDH3A and IDH3G subunits at low concentrations but inhibits their activities at high concentrations, whereas ATP exhibits only inhibitory effect on the heterodimer composed of IDH3A and IDH3B subunits. Functionally, catalytic subunit of the enzyme which catalyzes the decarboxylation of isocitrate (ICT) into alpha-ketoglutarate. The heterodimer composed of the alpha (IDH3A) and beta (IDH3B) subunits and the heterodimer composed of the alpha (IDH3A) and gamma (IDH3G) subunits, have considerable basal activity but the full activity of the heterotetramer (containing two subunits of IDH3A, one of IDH3B and one of IDH3G) requires the assembly and cooperative function of both heterodimers. The sequence is that of Isocitrate dehydrogenase [NAD] subunit alpha, mitochondrial from Homo sapiens (Human).